The following is an 82-amino-acid chain: Proline, histidine and glycine-rich protein 1 (82 aa).

Residues 20-82 (HCGPPPGHGP…PGHPPPGPHH (63 aa)) form a disordered region.

The sequence is that of Proline, histidine and glycine-rich protein 1 (PHGR1) from Homo sapiens (Human).